The primary structure comprises 211 residues: HTH-type transcriptional regulator AlkX (211 aa).

Positions 22–82 (ALLRDSVLDA…GYALRLADRL (61 aa)) constitute an HTH tetR-type domain. Positions 45–64 (TLSDVARAAGISRQTIYNEF) form a DNA-binding region, H-T-H motif.

As to quaternary structure, homodimer.

The protein resides in the cytoplasm. With respect to regulation, DNA-binding activity may be regulated by fatty acids. Represses the expression of the alkB-rubAB operon, which encodes the alkane hydroxylase AlkB and the rubredoxins RubA and RubB. Acts by binding to the promoter region of the operon. In addition, EMSA analysis show that AlkX can bind to the promoter region of mmpS1 and mmpL3 and to the intragenic region of mmpL11, suggesting that it may participate in the regulatory network that controls the expression of MmpL lipid transporters. In Mycobacterium tuberculosis (strain ATCC 25618 / H37Rv), this protein is HTH-type transcriptional regulator AlkX.